A 138-amino-acid chain; its full sequence is Large ribosomal subunit protein uL16 (138 aa).

Residues 1–13 show a composition bias toward basic residues; that stretch reads MLQPARRKFRKEQ. Residues 1 to 22 form a disordered region; it reads MLQPARRKFRKEQKGRNTGVAT.

This sequence belongs to the universal ribosomal protein uL16 family. Part of the 50S ribosomal subunit.

In terms of biological role, binds 23S rRNA and is also seen to make contacts with the A and possibly P site tRNAs. The chain is Large ribosomal subunit protein uL16 from Acidovorax ebreus (strain TPSY) (Diaphorobacter sp. (strain TPSY)).